Consider the following 349-residue polypeptide: GDSL esterase/lipase At1g58525 (349 aa).

Positions 1–19 are cleaved as a signal peptide; that stretch reads MKLQILLLALVLIAVEANA. The N-linked (GlcNAc...) asparagine glycan is linked to N25. S37 functions as the Nucleophile in the catalytic mechanism. The N-linked (GlcNAc...) asparagine glycan is linked to N316. Active-site residues include D324 and H327.

This sequence belongs to the 'GDSL' lipolytic enzyme family.

The protein localises to the secreted. The protein is GDSL esterase/lipase At1g58525 of Arabidopsis thaliana (Mouse-ear cress).